A 307-amino-acid chain; its full sequence is Pseudouridine-5'-phosphate glycosidase (307 aa).

Catalysis depends on Glu-26, which acts as the Proton donor. Substrate is bound by residues Lys-88 and Val-108. Asp-140 provides a ligand contact to Mn(2+). A substrate-binding site is contributed by 142–144 (SAD). Residue Lys-161 is the Nucleophile of the active site.

The protein belongs to the pseudouridine-5'-phosphate glycosidase family. Homotrimer. It depends on Mn(2+) as a cofactor.

The enzyme catalyses D-ribose 5-phosphate + uracil = psi-UMP + H2O. Functionally, catalyzes the reversible cleavage of pseudouridine 5'-phosphate (PsiMP) to ribose 5-phosphate and uracil. Functions biologically in the cleavage direction, as part of a pseudouridine degradation pathway. The protein is Pseudouridine-5'-phosphate glycosidase of Clostridium botulinum (strain Langeland / NCTC 10281 / Type F).